We begin with the raw amino-acid sequence, 360 residues long: Histidinol-phosphate aminotransferase (360 aa).

Lys-213 carries the N6-(pyridoxal phosphate)lysine modification.

It belongs to the class-II pyridoxal-phosphate-dependent aminotransferase family. Histidinol-phosphate aminotransferase subfamily. As to quaternary structure, homodimer. Pyridoxal 5'-phosphate is required as a cofactor.

It carries out the reaction L-histidinol phosphate + 2-oxoglutarate = 3-(imidazol-4-yl)-2-oxopropyl phosphate + L-glutamate. It participates in amino-acid biosynthesis; L-histidine biosynthesis; L-histidine from 5-phospho-alpha-D-ribose 1-diphosphate: step 7/9. This Baumannia cicadellinicola subsp. Homalodisca coagulata protein is Histidinol-phosphate aminotransferase.